The following is a 136-amino-acid chain: Large ribosomal subunit protein uL16 (136 aa).

The protein belongs to the universal ribosomal protein uL16 family. As to quaternary structure, part of the 50S ribosomal subunit.

In terms of biological role, binds 23S rRNA and is also seen to make contacts with the A and possibly P site tRNAs. The sequence is that of Large ribosomal subunit protein uL16 from Actinobacillus succinogenes (strain ATCC 55618 / DSM 22257 / CCUG 43843 / 130Z).